Consider the following 565-residue polypeptide: DNA-dependent metalloprotease SPRTN (565 aa).

Residues 23 to 130 (RALFLEFNDT…RTGANISVYH (108 aa)) enclose the SprT-like domain. Histidine 88 contacts Zn(2+). Glutamate 89 is an active-site residue. Residues histidine 92 and histidine 107 each contribute to the Zn(2+) site. The segment at 191–219 (EPENYPQKRKRKNDPTISEVNSSSHVKGK) is disordered. Polar residues predominate over residues 205-215 (PTISEVNSSSH). An SHP-box motif is present at residues 231–239 (FSGTGYKLF). The PIP-box motif lies at 288–295 (STPAQSIL). The segment at 349–389 (TLPSPSIQSTSQKPQKDISFGFTLPSQSFPSTSPGSNSENK) is disordered. Composition is skewed to polar residues over residues 351 to 361 (PSPSIQSTSQK) and 372 to 386 (LPSQSFPSTSPGSNS). Residues 436 to 463 (KVSCPVCGTEVLECKINDHLDTCTSSGP) form a UBZ4-type 1 zinc finger. Residues cysteine 439, cysteine 442, histidine 454, and cysteine 458 each coordinate Zn(2+). Positions 476 to 499 (QSFPSTSQGSNSAIKEPLYKKLQI) match the Nuclear localization signal motif. Residues 537 to 564 (KVCCPVCGTDVLQDKINDHLDTCLQNCN) form a UBZ4-type 2 zinc finger. Zn(2+) is bound by residues cysteine 540, cysteine 543, histidine 555, and cysteine 559.

This sequence belongs to the Spartan family. Homodimer. Zn(2+) is required as a cofactor. Post-translationally, autocatalytically cleaved in response to double-stranded DNA-binding: autocatalytic cleavage takes place in trans and leads to inactivation.

It localises to the nucleus. It is found in the chromosome. Its activity is regulated as follows. DNA-binding activates the protease activity: single-stranded DNA-binding specifically activates ability to cleave covalent DNA-protein cross-links (DPCs). In contrast, double-stranded DNA-binding specifically activates autocatalytic cleavage, and subsequent inactivation. DNA-dependent metalloendopeptidase that mediates the proteolytic cleavage of covalent DNA-protein cross-links (DPCs) during DNA synthesis, thereby playing a key role in maintaining genomic integrity. DPCs are highly toxic DNA lesions that interfere with essential chromatin transactions, such as replication and transcription, and which are induced by reactive agents, such as UV light or formaldehyde. Associates with the DNA replication machinery and specifically removes DPCs during DNA synthesis. Catalyzes proteolytic cleavage of the hmces DNA-protein cross-link following unfolding by the brip1/fancj helicase. Acts as a pleiotropic protease for DNA-binding proteins cross-linked with DNA, such as top1, top2a, histones H3 and H4. Mediates degradation of DPCs that are not ubiquitinated, while it is not able to degrade ubiquitinated DPCs. SPRTN activation requires polymerase collision with DPCs followed by helicase bypass of DPCs. May also act as a 'reader' of ubiquitinated pcna: facilitates chromatin association of rad18 and is required for efficient pcna monoubiquitination, promoting a feed-forward loop to enhance pcna ubiquitination and translesion DNA synthesis. Acts as a regulator of translesion DNA synthesis by recruiting vcp/p97 to sites of DNA damage. The protein is DNA-dependent metalloprotease SPRTN of Xenopus laevis (African clawed frog).